The following is a 259-amino-acid chain: Thiazole synthase (259 aa).

Residue K98 is the Schiff-base intermediate with DXP of the active site. Residues G159, A185–G186, and N207–S208 each bind 1-deoxy-D-xylulose 5-phosphate.

The protein belongs to the ThiG family. Homotetramer. Forms heterodimers with either ThiH or ThiS.

The protein localises to the cytoplasm. The catalysed reaction is [ThiS sulfur-carrier protein]-C-terminal-Gly-aminoethanethioate + 2-iminoacetate + 1-deoxy-D-xylulose 5-phosphate = [ThiS sulfur-carrier protein]-C-terminal Gly-Gly + 2-[(2R,5Z)-2-carboxy-4-methylthiazol-5(2H)-ylidene]ethyl phosphate + 2 H2O + H(+). It participates in cofactor biosynthesis; thiamine diphosphate biosynthesis. In terms of biological role, catalyzes the rearrangement of 1-deoxy-D-xylulose 5-phosphate (DXP) to produce the thiazole phosphate moiety of thiamine. Sulfur is provided by the thiocarboxylate moiety of the carrier protein ThiS. In vitro, sulfur can be provided by H(2)S. The polypeptide is Thiazole synthase (Chlorobium phaeobacteroides (strain BS1)).